The primary structure comprises 96 residues: Large ribosomal subunit protein bL27 (96 aa).

A propeptide spanning residues 1 to 9 (MLRLDLQFF) is cleaved from the precursor.

It belongs to the bacterial ribosomal protein bL27 family. In terms of processing, the N-terminus is cleaved by ribosomal processing cysteine protease Prp.

The chain is Large ribosomal subunit protein bL27 from Geobacillus kaustophilus (strain HTA426).